A 319-amino-acid polypeptide reads, in one-letter code: MRVLLIAGGVSPEHEVSLLSAEGVLRHMPFPTDLAVIARDGRWLLGEKALAALEAKAAPEGEHPFPPPLPWERYDVVFPLLHGRFGEDGTVQGFLELLGKPYVGAGVAASALCMDKDLSKRVLAQAGVPVVPWVAVRKGEPSMVPFDPPFFVKPANTGSSVGISRVERFQDLEAALALAFRYDEKAVVEKALSPVRELEVGVLGNVFGEASPVGEVRYEAPFYDYETKYTPGRAELLIPAPLDPGTQETVQELALKAYKVLGVRGMARVDFFLAEGEVYLNELNTIPGFTPTSMYPRLFEAGGVAYPELLRRLVELALT.

An ATP-grasp domain is found at 120 to 315 (KRVLAQAGVP…YPELLRRLVE (196 aa)). 147-198 (DPPFFVKPANTGSSVGISRVERFQDLEAALALAFRYDEKAVVEKALSPVREL) contacts ATP. Mg(2+) is bound by residues Asp-270, Glu-282, and Asn-284.

The protein belongs to the D-alanine--D-alanine ligase family. Mg(2+) is required as a cofactor. Requires Mn(2+) as cofactor.

It localises to the cytoplasm. It carries out the reaction 2 D-alanine + ATP = D-alanyl-D-alanine + ADP + phosphate + H(+). Its pathway is cell wall biogenesis; peptidoglycan biosynthesis. Functionally, cell wall formation. This is D-alanine--D-alanine ligase from Thermus thermophilus (strain ATCC BAA-163 / DSM 7039 / HB27).